The primary structure comprises 372 residues: Chaperone protein DnaJ (372 aa).

In terms of domain architecture, J spans Asp5–Gly70. The CR-type zinc finger occupies Gly127–Tyr205. Positions 140, 143, 157, 160, 179, 182, 193, and 196 each coordinate Zn(2+). 4 CXXCXGXG motif repeats span residues Cys140 to Gly147, Cys157 to Gly164, Cys179 to Gly186, and Cys193 to Gly200.

The protein belongs to the DnaJ family. Homodimer. Zn(2+) serves as cofactor.

The protein resides in the cytoplasm. Its function is as follows. Participates actively in the response to hyperosmotic and heat shock by preventing the aggregation of stress-denatured proteins and by disaggregating proteins, also in an autonomous, DnaK-independent fashion. Unfolded proteins bind initially to DnaJ; upon interaction with the DnaJ-bound protein, DnaK hydrolyzes its bound ATP, resulting in the formation of a stable complex. GrpE releases ADP from DnaK; ATP binding to DnaK triggers the release of the substrate protein, thus completing the reaction cycle. Several rounds of ATP-dependent interactions between DnaJ, DnaK and GrpE are required for fully efficient folding. Also involved, together with DnaK and GrpE, in the DNA replication of plasmids through activation of initiation proteins. This chain is Chaperone protein DnaJ, found in Photorhabdus laumondii subsp. laumondii (strain DSM 15139 / CIP 105565 / TT01) (Photorhabdus luminescens subsp. laumondii).